Reading from the N-terminus, the 343-residue chain is Dihydroorotate dehydrogenase (quinone) (343 aa).

Residues 61–65 (AGLDK) and T85 each bind FMN. K65 contributes to the substrate binding site. Residue 110 to 114 (NRMGF) participates in substrate binding. 2 residues coordinate FMN: N138 and N171. N171 contributes to the substrate binding site. Catalysis depends on S174, which acts as the Nucleophile. N176 contacts substrate. The FMN site is built by K216 and T244. 245–246 (NT) is a substrate binding site. Residues G267, G296, and 317–318 (YS) each bind FMN.

Belongs to the dihydroorotate dehydrogenase family. Type 2 subfamily. In terms of assembly, monomer. FMN is required as a cofactor.

It is found in the cell membrane. It catalyses the reaction (S)-dihydroorotate + a quinone = orotate + a quinol. It participates in pyrimidine metabolism; UMP biosynthesis via de novo pathway; orotate from (S)-dihydroorotate (quinone route): step 1/1. Catalyzes the conversion of dihydroorotate to orotate with quinone as electron acceptor. This is Dihydroorotate dehydrogenase (quinone) from Pseudomonas syringae pv. tomato (strain ATCC BAA-871 / DC3000).